A 313-amino-acid chain; its full sequence is Olfactory receptor 4M2 (313 aa).

Topologically, residues 1-25 are extracellular; the sequence is METANYTKVTEFVLTGLSQTPEVQL. Residue Asn-5 is glycosylated (N-linked (GlcNAc...) asparagine). Residues 26–49 form a helical membrane-spanning segment; the sequence is VLFVIFLSFYLFILPGNILIICTI. Over 50 to 57 the chain is Cytoplasmic; that stretch reads SLDPHLTS. Residues 58-79 traverse the membrane as a helical segment; that stretch reads PMYFLLANLAFLDIWYSSITAP. At 80–100 the chain is on the extracellular side; sequence EMLIDFFVERKIISFDGCIAQ. A disulfide bond links Cys-97 and Cys-189. Residues 101–120 form a helical membrane-spanning segment; the sequence is LFFLHFAGASEMFLLTVMAF. Residues 121 to 139 are Cytoplasmic-facing; it reads DLYTAICRPLHYATIMNQR. Residues 140–158 form a helical membrane-spanning segment; sequence LCCILVALSWRGGFIHSII. At 159–195 the chain is on the extracellular side; that stretch reads QVALIVRLPFCGPNELDSYFCDITQVVRIACANTFPE. The helical transmembrane segment at 196–219 threads the bilayer; it reads ELVMICSSGLISVVCLIALLMSYA. Topologically, residues 220 to 237 are cytoplasmic; the sequence is FLLALFKKLSGSGENTNR. A helical membrane pass occupies residues 238–260; sequence AMSTCYSHITIVVLMFGPSIYIY. At 261–271 the chain is on the extracellular side; sequence ARPFDSFSLDK. Residues 272–291 traverse the membrane as a helical segment; it reads VVSVFNTLIFPLRNPIIYTL. At 292–313 the chain is on the cytoplasmic side; that stretch reads RNKEVKAAMRKLVTKYILCKEK.

It belongs to the G-protein coupled receptor 1 family.

The protein resides in the cell membrane. In terms of biological role, odorant receptor. This is Olfactory receptor 4M2 (OR4M2) from Homo sapiens (Human).